The following is a 154-amino-acid chain: Xanthine-guanine phosphoribosyltransferase (154 aa).

Residues 37–38, R69, and 88–96 contribute to the 5-phospho-alpha-D-ribose 1-diphosphate site; these read RG and EDLVDSGDT. R69 is a binding site for GMP. D89 contributes to the Mg(2+) binding site. Guanine is bound by residues D92 and I135. The xanthine site is built by D92 and I135. Residues 92 to 96 and 134 to 135 each bind GMP; these read DSGDT and WI.

It belongs to the purine/pyrimidine phosphoribosyltransferase family. XGPT subfamily. Homotetramer. The cofactor is Mg(2+).

The protein localises to the cell inner membrane. It carries out the reaction GMP + diphosphate = guanine + 5-phospho-alpha-D-ribose 1-diphosphate. The catalysed reaction is XMP + diphosphate = xanthine + 5-phospho-alpha-D-ribose 1-diphosphate. It catalyses the reaction IMP + diphosphate = hypoxanthine + 5-phospho-alpha-D-ribose 1-diphosphate. It participates in purine metabolism; GMP biosynthesis via salvage pathway; GMP from guanine: step 1/1. The protein operates within purine metabolism; XMP biosynthesis via salvage pathway; XMP from xanthine: step 1/1. In terms of biological role, purine salvage pathway enzyme that catalyzes the transfer of the ribosyl-5-phosphate group from 5-phospho-alpha-D-ribose 1-diphosphate (PRPP) to the N9 position of the 6-oxopurines guanine and xanthine to form the corresponding ribonucleotides GMP (guanosine 5'-monophosphate) and XMP (xanthosine 5'-monophosphate), with the release of PPi. To a lesser extent, also acts on hypoxanthine. This chain is Xanthine-guanine phosphoribosyltransferase, found in Vibrio atlanticus (strain LGP32) (Vibrio splendidus (strain Mel32)).